The following is a 356-amino-acid chain: Histidinol-phosphate aminotransferase 1 (356 aa).

K210 bears the N6-(pyridoxal phosphate)lysine mark.

This sequence belongs to the class-II pyridoxal-phosphate-dependent aminotransferase family. Histidinol-phosphate aminotransferase subfamily. Homodimer. Pyridoxal 5'-phosphate is required as a cofactor.

It carries out the reaction L-histidinol phosphate + 2-oxoglutarate = 3-(imidazol-4-yl)-2-oxopropyl phosphate + L-glutamate. The protein operates within amino-acid biosynthesis; L-histidine biosynthesis; L-histidine from 5-phospho-alpha-D-ribose 1-diphosphate: step 7/9. The chain is Histidinol-phosphate aminotransferase 1 from Hydrogenovibrio crunogenus (strain DSM 25203 / XCL-2) (Thiomicrospira crunogena).